The following is a 51-amino-acid chain: Small ribosomal subunit protein uS14 (51 aa).

The Zn(2+) site is built by Cys-16, Cys-19, Cys-34, and Cys-37.

Belongs to the universal ribosomal protein uS14 family. Zinc-binding uS14 subfamily. In terms of assembly, part of the 30S ribosomal subunit. Zn(2+) serves as cofactor.

Binds 16S rRNA, required for the assembly of 30S particles. The chain is Small ribosomal subunit protein uS14 from Archaeoglobus fulgidus (strain ATCC 49558 / DSM 4304 / JCM 9628 / NBRC 100126 / VC-16).